The following is a 411-amino-acid chain: Peptidase T (411 aa).

Residue H78 coordinates Zn(2+). D80 is a catalytic residue. D140 contributes to the Zn(2+) binding site. E173 serves as the catalytic Proton acceptor. The Zn(2+) site is built by E174, D196, and H379.

This sequence belongs to the peptidase M20B family. The cofactor is Zn(2+).

It is found in the cytoplasm. It catalyses the reaction Release of the N-terminal residue from a tripeptide.. In terms of biological role, cleaves the N-terminal amino acid of tripeptides. In Yersinia pseudotuberculosis serotype O:1b (strain IP 31758), this protein is Peptidase T.